Reading from the N-terminus, the 397-residue chain is Lysophospholipid transporter LplT (397 aa).

Residues 1-17 (MSESVHTNTSLWSKGMK) lie on the Periplasmic side of the membrane. Residues 18–38 (AVIVAQFLSAFGDNALLFATL) form a helical membrane-spanning segment. Topologically, residues 39-52 (ALLKAQFYPEWSQP) are cytoplasmic. The helical transmembrane segment at 53–73 (ILQMVFVGAYILFAPFVGQVA) threads the bilayer. Topologically, residues 74–90 (DSFAKGRVMMFANGLKL) are periplasmic. The chain crosses the membrane as a helical span at residues 91–111 (LGAASICFGINPFLGYTLVGV). The Cytoplasmic portion of the chain corresponds to 112–144 (GAAAYSPAKYGILGELTTGSKLVKANGLMEAST). Residues 145 to 165 (IAAILLGSVAGGVLADWHVLV) traverse the membrane as a helical segment. Residue A166 is a topological domain, periplasmic. The helical transmembrane segment at 167-187 (LAACALAYGGAVVANIYIPKL) threads the bilayer. Topologically, residues 188-226 (AAARPGQSWNLINMTRSFLNACTSLWCNGETRFSLVGTS) are cytoplasmic. A helical transmembrane segment spans residues 227–247 (LFWGAGVTLRFLLVLWVPVAL). Residues 248–256 (GITDNATPT) are Periplasmic-facing. The helical transmembrane segment at 257-277 (YLNAMVAIGIVVGAGAAAKLV) threads the bilayer. Over 278-280 (TLE) the chain is Cytoplasmic. Residues 281–301 (TVSRCMPAGILIGVVVLIFSL) traverse the membrane as a helical segment. Over 302-304 (QHE) the chain is Periplasmic. The helical transmembrane segment at 305–325 (LLPAYALLMLIGVLGGFFVVP) threads the bilayer. Over 326 to 343 (LNALLQERGKKSVGAGNA) the chain is Cytoplasmic. The helical transmembrane segment at 344–364 (IAVQNLGENSAMLLMLGIYSL) threads the bilayer. Topologically, residues 365 to 366 (AV) are periplasmic. A helical membrane pass occupies residues 367–387 (MVGIPVVPIGIGFGALFALAI). The Cytoplasmic segment spans residues 388–397 (TALWIWQRRH).

Belongs to the major facilitator superfamily. LplT (TC 2.A.1.42) family.

The protein localises to the cell inner membrane. Catalyzes the facilitated diffusion of 2-acyl-glycero-3-phosphoethanolamine (2-acyl-GPE) into the cell. In Shigella dysenteriae serotype 1 (strain Sd197), this protein is Lysophospholipid transporter LplT.